The chain runs to 249 residues: Probable transcriptional regulatory protein ERGA_CDS_03720 (249 aa).

Positions 1–21 are disordered; sequence MAGHSQFANIKHRKGAQDAKR.

Belongs to the TACO1 family.

The protein resides in the cytoplasm. The chain is Probable transcriptional regulatory protein ERGA_CDS_03720 from Ehrlichia ruminantium (strain Gardel).